Consider the following 248-residue polypeptide: 2,3-bisphosphoglycerate-dependent phosphoglycerate mutase (248 aa).

Residues 8 to 15, 21 to 22, Arg60, 87 to 90, Lys98, 114 to 115, and 183 to 184 contribute to the substrate site; these read RHGESIWN, TG, EKHY, RR, and GN. His9 (tele-phosphohistidine intermediate) is an active-site residue. Glu87 serves as the catalytic Proton donor/acceptor.

Belongs to the phosphoglycerate mutase family. BPG-dependent PGAM subfamily.

The enzyme catalyses (2R)-2-phosphoglycerate = (2R)-3-phosphoglycerate. It participates in carbohydrate degradation; glycolysis; pyruvate from D-glyceraldehyde 3-phosphate: step 3/5. Catalyzes the interconversion of 2-phosphoglycerate and 3-phosphoglycerate. In Parabacteroides distasonis (strain ATCC 8503 / DSM 20701 / CIP 104284 / JCM 5825 / NCTC 11152), this protein is 2,3-bisphosphoglycerate-dependent phosphoglycerate mutase.